We begin with the raw amino-acid sequence, 379 residues long: Dual-specificity RNA methyltransferase RlmN (379 aa).

Glu-95 functions as the Proton acceptor in the catalytic mechanism. Residues 101–345 (EETRGTLCVS…TTVRKTRGDD (245 aa)) form the Radical SAM core domain. Cys-108 and Cys-350 are joined by a disulfide. [4Fe-4S] cluster is bound by residues Cys-115, Cys-119, and Cys-122. Residues 176–177 (GE), Ser-208, 230–232 (SLH), and Asn-307 contribute to the S-adenosyl-L-methionine site. Cys-350 acts as the S-methylcysteine intermediate in catalysis.

This sequence belongs to the radical SAM superfamily. RlmN family. It depends on [4Fe-4S] cluster as a cofactor.

It localises to the cytoplasm. The enzyme catalyses adenosine(2503) in 23S rRNA + 2 reduced [2Fe-2S]-[ferredoxin] + 2 S-adenosyl-L-methionine = 2-methyladenosine(2503) in 23S rRNA + 5'-deoxyadenosine + L-methionine + 2 oxidized [2Fe-2S]-[ferredoxin] + S-adenosyl-L-homocysteine. The catalysed reaction is adenosine(37) in tRNA + 2 reduced [2Fe-2S]-[ferredoxin] + 2 S-adenosyl-L-methionine = 2-methyladenosine(37) in tRNA + 5'-deoxyadenosine + L-methionine + 2 oxidized [2Fe-2S]-[ferredoxin] + S-adenosyl-L-homocysteine. Functionally, specifically methylates position 2 of adenine 2503 in 23S rRNA and position 2 of adenine 37 in tRNAs. m2A2503 modification seems to play a crucial role in the proofreading step occurring at the peptidyl transferase center and thus would serve to optimize ribosomal fidelity. The polypeptide is Dual-specificity RNA methyltransferase RlmN (Burkholderia cenocepacia (strain HI2424)).